The sequence spans 97 residues: Large ribosomal subunit protein eL21 (97 aa).

Over residues 1–24 the composition is skewed to basic residues; it reads MVQKAHSFRRKTRKKLRKHPRRRG. Residues 1-25 are disordered; sequence MVQKAHSFRRKTRKKLRKHPRRRGL.

The protein belongs to the eukaryotic ribosomal protein eL21 family.

This chain is Large ribosomal subunit protein eL21 (rpl21e), found in Pyrococcus abyssi (strain GE5 / Orsay).